Consider the following 146-residue polypeptide: MNSLSIFFIVVATAAVCLLFIQGYSIYENYGNIKEFNATHAALEYSKSIGGTPALDRRVQDVNDTISDVKQKWRCVAYPGNGFVSASIFGFQAEVGPNNTRSIRKFNTMAQCIDFTFSDVINIDIYNPCVAPNINNVECQFLKSVL.

The helical; Signal-anchor for type II membrane protein transmembrane segment at 1 to 21 threads the bilayer; that stretch reads MNSLSIFFIVVATAAVCLLFI. The Virion surface portion of the chain corresponds to 22–146; it reads QGYSIYENYG…VECQFLKSVL (125 aa).

This sequence belongs to the orthopoxvirus OPG155 protein family. Part of a stable entry-fusion complex (EFC) which is at least composed of proteins OPG143, OPG147, OPG155, OPG086, OPG094, OPG107, OPG104, and OPG099. Formation of the viral membrane is necessary for the assembly of the complex. Interacts directly with protein OPG107. In terms of processing, contains two intramolecular disulfide bonds. They are created by the viral disulfide bond formation pathway, a poxvirus-specific pathway that operates on the cytoplasmic side of the MV membranes.

It is found in the virion membrane. In terms of biological role, envelope protein required for virus entry into host cell and for cell-cell fusion (syncytium formation). This Camelus protein is Envelope protein OPG155 (OPG155).